The sequence spans 117 residues: Large ribosomal subunit protein bL19 (117 aa).

This sequence belongs to the bacterial ribosomal protein bL19 family.

Functionally, this protein is located at the 30S-50S ribosomal subunit interface and may play a role in the structure and function of the aminoacyl-tRNA binding site. The polypeptide is Large ribosomal subunit protein bL19 (Aliivibrio fischeri (strain ATCC 700601 / ES114) (Vibrio fischeri)).